Reading from the N-terminus, the 644-residue chain is Threonine--tRNA ligase (644 aa).

Residues 1–61 (MVAITLPDGS…AHDAKVEIVT (61 aa)) enclose the TGS domain. Positions 242–533 (DHRKIGKALN…LIENYAGWMP (292 aa)) are catalytic. Zn(2+) is bound by residues Cys333, His384, and His510.

This sequence belongs to the class-II aminoacyl-tRNA synthetase family. In terms of assembly, homodimer. Zn(2+) is required as a cofactor.

It is found in the cytoplasm. It catalyses the reaction tRNA(Thr) + L-threonine + ATP = L-threonyl-tRNA(Thr) + AMP + diphosphate + H(+). Catalyzes the attachment of threonine to tRNA(Thr) in a two-step reaction: L-threonine is first activated by ATP to form Thr-AMP and then transferred to the acceptor end of tRNA(Thr). Also edits incorrectly charged L-seryl-tRNA(Thr). The protein is Threonine--tRNA ligase of Psychrobacter cryohalolentis (strain ATCC BAA-1226 / DSM 17306 / VKM B-2378 / K5).